The chain runs to 231 residues: Lipoprotein-releasing system ATP-binding protein LolD (231 aa).

Residues L6–Q231 form the ABC transporter domain. G42–S49 lines the ATP pocket.

The protein belongs to the ABC transporter superfamily. Lipoprotein translocase (TC 3.A.1.125) family. The complex is composed of two ATP-binding proteins (LolD) and two transmembrane proteins (LolC and LolE).

It localises to the cell inner membrane. Functionally, part of the ABC transporter complex LolCDE involved in the translocation of mature outer membrane-directed lipoproteins, from the inner membrane to the periplasmic chaperone, LolA. Responsible for the formation of the LolA-lipoprotein complex in an ATP-dependent manner. The sequence is that of Lipoprotein-releasing system ATP-binding protein LolD from Shewanella sp. (strain MR-7).